The sequence spans 62 residues: Phospholipase A2 superbin a (62 aa).

Ca(2+)-binding residues include Y28, G30, and G32. An intrachain disulfide couples C29 to C45. H48 is an active-site residue. Position 49 (D49) interacts with Ca(2+).

Requires Ca(2+) as cofactor. Expressed by the venom gland.

It localises to the secreted. It catalyses the reaction a 1,2-diacyl-sn-glycero-3-phosphocholine + H2O = a 1-acyl-sn-glycero-3-phosphocholine + a fatty acid + H(+). Snake venom phospholipase A2 (PLA2) that inhibits collagen-induced platelet aggregation. In terms of inhibition of platelet aggregation, superbin a is more potent as superbin b, c, and d. PLA2 catalyzes the calcium-dependent hydrolysis of the 2-acyl groups in 3-sn-phosphoglycerides. The chain is Phospholipase A2 superbin a from Austrelaps superbus (Lowland copperhead snake).